The sequence spans 692 residues: NAD(P)H-quinone oxidoreductase subunit 5, chloroplastic (692 aa).

Transmembrane regions (helical) follow at residues Trp-9–Phe-29, Leu-39–Phe-59, Leu-89–Ile-109, Gly-120–Leu-140, Val-147–Thr-167, Ile-184–Asp-204, Asn-219–Ala-239, Thr-258–Ala-278, Phe-289–Ala-309, Leu-327–Ile-347, Ala-354–His-374, Ala-395–Trp-415, Trp-425–Tyr-445, Leu-503–Phe-523, Phe-555–Tyr-575, Trp-643–Leu-663, and Ile-671–Ile-691.

Belongs to the complex I subunit 5 family. NDH is composed of at least 16 different subunits, 5 of which are encoded in the nucleus.

It localises to the plastid. It is found in the chloroplast thylakoid membrane. The catalysed reaction is a plastoquinone + NADH + (n+1) H(+)(in) = a plastoquinol + NAD(+) + n H(+)(out). The enzyme catalyses a plastoquinone + NADPH + (n+1) H(+)(in) = a plastoquinol + NADP(+) + n H(+)(out). NDH shuttles electrons from NAD(P)H:plastoquinone, via FMN and iron-sulfur (Fe-S) centers, to quinones in the photosynthetic chain and possibly in a chloroplast respiratory chain. The immediate electron acceptor for the enzyme in this species is believed to be plastoquinone. Couples the redox reaction to proton translocation, and thus conserves the redox energy in a proton gradient. The polypeptide is NAD(P)H-quinone oxidoreductase subunit 5, chloroplastic (ndhF) (Marchantia polymorpha (Common liverwort)).